A 192-amino-acid chain; its full sequence is UPF0312 protein YE1254 (192 aa).

A signal peptide spans 1 to 23 (MFNKTLLGLTVGALMFTAGSAVA).

It belongs to the UPF0312 family. Type 1 subfamily.

Its subcellular location is the periplasm. The chain is UPF0312 protein YE1254 from Yersinia enterocolitica serotype O:8 / biotype 1B (strain NCTC 13174 / 8081).